A 60-amino-acid chain; its full sequence is Metallothionein A (60 aa).

The interval Met-1 to Cys-28 is beta. The a divalent metal cation site is built by Cys-4, Cys-6, Cys-12, Cys-14, Cys-18, Cys-20, Cys-23, Cys-25, Cys-28, Cys-32, Cys-33, Cys-35, Cys-36, Cys-40, Cys-43, Cys-47, Cys-49, Cys-54, Cys-58, and Cys-59. The tract at residues Lys-29–Gln-60 is alpha.

It belongs to the metallothionein superfamily. Type 1 family.

Its function is as follows. Metallothioneins have a high content of cysteine residues that bind various heavy metals. This Chionodraco hamatus (Antarctic teleost icefish) protein is Metallothionein A (mta).